The sequence spans 1459 residues: MAPVQLDNHQLIPPGGGGGSSGGGGSSSGSASAPAPPPPAAAVAAAAAAAASPGYRLSTLIEFLLHRAYSELMVLTDLLPRKSDVERKIEIVQFASRTRQLFVRLLALVKWANDAGKVEKCAMISSFLDQQAILFVDTADRLASLARDALVHARLPSFAIPYAIDVLTTGSYPRLPTCIRDKIIPPDPITKIEKQATLHQLNQILRHRLVTTDLPPQLANLTVANGRVKFRVEGEFEATLTVMGDDPEVPWRLLKLEILVEDKETGDGRALVHSMQIDFIHQLVQSRLFADEKPLQDMYNCLHCFCLSLQLEVLHSQTLMLIRERWGDLVQVERYHAGKSLSLSVWNQQVLGRKTGTASVHKVTIKIDENDVSKPLQIFHDPPLPASDSKLVERAMKIDHLSIEKLLIDSVHARAHQRLQELKAILRSFNANESSSIETALPALIVPILEPCGNSECLHIFVDLHSGMFQLMLYGLDPATLEDMEKSLNDDMKRIIPWIQQLKFWLGQQRCKQSIKHLPTITTETLQLANYSTHPIGSLSKNKLFIKLTRLPQYYIVVEMLEVPNKPTQLSYNYYFMSVSTADREDSPVMALLLQQFKDNIQDLMSYTKTGKQTRTGTKHKLSDDPCPIDSKKAKRSGEMCAFNKVLAHFVAMCDTNMPFVGLRLELSNLEIPHQGVQVEGDGFNHAIRLLKIPPCKGISEETQKALDRSLLDCTFRLQGRNNRTWVAELVFANCPLNGTSTREQGPSRHVYLTYENLLSEPVGGRKVVEMFLNDWSSIARLYECVLEFARSLPEIPAHLNIFSEVRVYNYRKLILCYGTTKGSSISIQWNSIHQKFHIALGTVGPNSGCSNCHNTILHQLQEMFNKTPNVVQLLQVLFDTQAPLNAINKLPTVPMLGLTQRTNTAYQCFSILPQSSTHIRLAFRNMYCIDIYCRSRGVVAIRDGAYSLFDNSKLVEGFYPAPGLKTFLNMFVDSNQDARRRSVNEDDNPPSPIGGDMMDSLISQLQPPQQQPFPKQPGTSGAYPLTSPPTSYHSTVNQSPSMMHTQSPGNLHAASSPSGALRAPSPASFVPTPPPSSHGISIGPGASFASPHGTLDPSSPYTMVSPSGRAGNWPGSPQVSGPSPATRLPGMSPANPSLHSPVPDVSHSPRAGTSSQTMPTNMPPPRKLPQRSWAASIPTILTHSALNILLLPSPTPGLVPGLAGSYLCSPLERFLGSVIMRRHLQRIIQQETLQLINSNEPGVIMFKTDALKCRVALSPKTNQTLQLKVTPENAGQWKPDELQVLEKFFETRVAGPPFKANTLIAFTKLLGAPTHILRDCVHIMKLELFPDQATQLKWNVQFCLTIPPSAPPIAPPGTPAVVLKSKMLFFLQLTQKTSVPPQEPVSIIVPIIYDMASGTTQQADIPRQQNSSVAAPMMVSNILKRFAEMNPPRQGECTIFAAVRDLMANLTLPPGGRP.

The tract at residues 1-37 is disordered; it reads MAPVQLDNHQLIPPGGGGGSSGGGGSSSGSASAPAPP. Gly residues predominate over residues 14–27; it reads PGGGGGSSGGGGSS. The short motif at 75-79 is the LXXLL motif 1 element; the sequence is LTDLL. The interaction with STAT2 stretch occupies residues 194-572; the sequence is KQATLHQLNQ…VPNKPTQLSY (379 aa). The tract at residues 506-830 is interaction with SREBF1; the sequence is LGQQRCKQSI…TKGSSISIQW (325 aa). A phosphoserine mark is found at serine 623 and serine 992. Positions 979–1171 are disordered; it reads ARRRSVNEDD…NMPPPRKLPQ (193 aa). Composition is skewed to polar residues over residues 1029–1059 and 1097–1106; these read PPTS…SSPS and DPSSPYTMVS. 5 positions are modified to phosphoserine: serine 1117, serine 1124, serine 1133, serine 1141, and serine 1149. A compositionally biased stretch (polar residues) spans 1152–1161; the sequence is AGTSSQTMPT. Positions 1187-1191 match the LXXLL motif 2 motif; the sequence is LNILL.

This sequence belongs to the Mediator complex subunit 14 family. In terms of assembly, component of the Mediator complex, which is composed of MED1, MED4, MED6, MED7, MED8, MED9, MED10, MED11, MED12, MED13, MED13L, MED14, MED15, MED16, MED17, MED18, MED19, MED20, MED21, MED22, MED23, MED24, MED25, MED26, MED27, MED29, MED30, MED31, CCNC, CDK8 and CDC2L6/CDK11. The MED12, MED13, CCNC and CDK8 subunits form a distinct module termed the CDK8 module. Mediator containing the CDK8 module is less active than Mediator lacking this module in supporting transcriptional activation. Individual preparations of the Mediator complex lacking one or more distinct subunits have been variously termed ARC, CRSP, DRIP, PC2, SMCC and TRAP. Interacts with AR, ESR1, SREBF1 and STAT2. Interacts with GATA1.

It localises to the nucleus. In terms of biological role, component of the Mediator complex, a coactivator involved in the regulated transcription of nearly all RNA polymerase II-dependent genes. Mediator functions as a bridge to convey information from gene-specific regulatory proteins to the basal RNA polymerase II transcription machinery. Mediator is recruited to promoters by direct interactions with regulatory proteins and serves as a scaffold for the assembly of a functional preinitiation complex with RNA polymerase II and the general transcription factors. The protein is Mediator of RNA polymerase II transcription subunit 14 (Med14) of Mus musculus (Mouse).